Reading from the N-terminus, the 476-residue chain is Glycogen synthase (476 aa).

Lys15 contributes to the ADP-alpha-D-glucose binding site.

This sequence belongs to the glycosyltransferase 1 family. Bacterial/plant glycogen synthase subfamily.

It catalyses the reaction [(1-&gt;4)-alpha-D-glucosyl](n) + ADP-alpha-D-glucose = [(1-&gt;4)-alpha-D-glucosyl](n+1) + ADP + H(+). The protein operates within glycan biosynthesis; glycogen biosynthesis. Synthesizes alpha-1,4-glucan chains using ADP-glucose. This Streptococcus sanguinis (strain SK36) protein is Glycogen synthase.